Here is a 36-residue protein sequence, read N- to C-terminus: Photosystem I reaction center subunit VIII (36 aa).

A helical membrane pass occupies residues 5 to 27 (FLPSILVPLVGLVFPAIAIASLF).

Belongs to the PsaI family.

It localises to the plastid. Its subcellular location is the chloroplast thylakoid membrane. Its function is as follows. May help in the organization of the PsaL subunit. The chain is Photosystem I reaction center subunit VIII from Chaetosphaeridium globosum (Charophycean green alga).